The following is a 588-amino-acid chain: Sentrin-specific protease 2 (588 aa).

Positions 28–31 (KRRR) match the Nuclear localization signal motif. The residue at position 32 (Ser-32) is a Phosphoserine. The Nuclear localization signal signature appears at 47-52 (PAKRPR). Positions 157-184 (EGYNRRPSGRRHSKSNPESSLTWKPQEQ) are disordered. Over residues 172-184 (NPESSLTWKPQEQ) the composition is skewed to polar residues. The Nuclear export signal signature appears at 316–331 (MEPDLSEEVSARLRLG). Phosphoserine occurs at positions 332 and 343. The tract at residues 394 to 558 (LRITRGDIQT…MFTCKYADYI (165 aa)) is protease. Active-site residues include His-477 and Asp-494. Cys-547 functions as the Nucleophile in the catalytic mechanism.

This sequence belongs to the peptidase C48 family. In terms of assembly, binds to SUMO2 and SUMO3. Interacts with the C-terminal domain of NUP153 via its N-terminus. Interacts with MTA1. Post-translationally, polyubiquitinated; which leads to proteasomal degradation. In terms of tissue distribution, highly expressed in testis. Detected in brain, heart and thymus.

It localises to the nucleus. Its subcellular location is the nuclear pore complex. The protein localises to the nucleus membrane. The protein resides in the cytoplasm. It is found in the cytoplasmic vesicle. It localises to the PML body. Protease that catalyzes two essential functions in the SUMO pathway. The first is the hydrolysis of an alpha-linked peptide bond at the C-terminal end of the small ubiquitin-like modifier (SUMO) propeptides, SUMO1, SUMO2 and SUMO3 leading to the mature form of the proteins. The second is the deconjugation of SUMO1, SUMO2 and SUMO3 from targeted proteins, by cleaving an epsilon-linked peptide bond between the C-terminal glycine of the mature SUMO and the lysine epsilon-amino group of the target protein. May down-regulate CTNNB1 levels and thereby modulate the Wnt pathway. Deconjugates SUMO2 from MTA1. Plays a dynamic role in adipogenesis by desumoylating and promoting the stabilization of CEBPB. Acts as a regulator of the cGAS-STING pathway by catalyzing desumoylation of CGAS and STING1 during the late phase of viral infection. In terms of biological role, activates transcription. The chain is Sentrin-specific protease 2 (Senp2) from Mus musculus (Mouse).